A 425-amino-acid chain; its full sequence is Phosphomethylpyrimidine synthase (425 aa).

Substrate-binding positions include methionine 94, tyrosine 123, histidine 162, 184-186 (SRG), 225-228 (NGMR), and glutamate 264. Histidine 268 lines the Zn(2+) pocket. Substrate is bound at residue tyrosine 291. Residue histidine 332 participates in Zn(2+) binding. 3 residues coordinate [4Fe-4S] cluster: cysteine 407, cysteine 410, and cysteine 414.

It belongs to the ThiC family. [4Fe-4S] cluster is required as a cofactor.

The catalysed reaction is 5-amino-1-(5-phospho-beta-D-ribosyl)imidazole + S-adenosyl-L-methionine = 4-amino-2-methyl-5-(phosphooxymethyl)pyrimidine + CO + 5'-deoxyadenosine + formate + L-methionine + 3 H(+). Its pathway is cofactor biosynthesis; thiamine diphosphate biosynthesis. Its function is as follows. Catalyzes the synthesis of the hydroxymethylpyrimidine phosphate (HMP-P) moiety of thiamine from aminoimidazole ribotide (AIR) in a radical S-adenosyl-L-methionine (SAM)-dependent reaction. The protein is Phosphomethylpyrimidine synthase of Methanocorpusculum labreanum (strain ATCC 43576 / DSM 4855 / Z).